The primary structure comprises 506 residues: NAD(P)H-quinone oxidoreductase subunit 2 (506 aa).

A run of 14 helical transmembrane segments spans residues 14-34 (AIIP…VDLA), 42-62 (WAPV…ALQW), 79-99 (LAIA…LISW), 108-128 (PIGE…LLCG), 132-152 (LVSV…LSGY), 167-187 (LLVG…LYGL), 206-226 (FITS…IAAV), 240-260 (PTPV…AFAI), 276-296 (LLFT…ALAQ), 302-322 (MLAY…VSGT), 330-350 (VLYL…VILF), 374-394 (LGLS…GFFG), 409-429 (LLVV…ISVI), and 462-482 (IALY…NPLF).

The protein belongs to the complex I subunit 2 family. In terms of assembly, NDH-1 can be composed of about 15 different subunits; different subcomplexes with different compositions have been identified which probably have different functions.

Its subcellular location is the cellular thylakoid membrane. The enzyme catalyses a plastoquinone + NADH + (n+1) H(+)(in) = a plastoquinol + NAD(+) + n H(+)(out). The catalysed reaction is a plastoquinone + NADPH + (n+1) H(+)(in) = a plastoquinol + NADP(+) + n H(+)(out). NDH-1 shuttles electrons from an unknown electron donor, via FMN and iron-sulfur (Fe-S) centers, to quinones in the respiratory and/or the photosynthetic chain. The immediate electron acceptor for the enzyme in this species is believed to be plastoquinone. Couples the redox reaction to proton translocation, and thus conserves the redox energy in a proton gradient. Cyanobacterial NDH-1 also plays a role in inorganic carbon-concentration. The protein is NAD(P)H-quinone oxidoreductase subunit 2 of Prochlorococcus marinus subsp. pastoris (strain CCMP1986 / NIES-2087 / MED4).